A 435-amino-acid chain; its full sequence is Tryptophan--tRNA ligase (435 aa).

Residues 10-12 (TTS) and 18-19 (GN) each bind ATP. The short motif at 11-19 (TSGTPHLGN) is the 'HIGH' region element. Residue aspartate 143 participates in L-tryptophan binding. ATP contacts are provided by residues 155–157 (GRD), leucine 195, and 202–206 (KMSKS). The 'KMSKS' region motif lies at 202 to 206 (KMSKS).

The protein belongs to the class-I aminoacyl-tRNA synthetase family. In terms of assembly, homodimer.

The protein localises to the cytoplasm. It carries out the reaction tRNA(Trp) + L-tryptophan + ATP = L-tryptophyl-tRNA(Trp) + AMP + diphosphate + H(+). Its function is as follows. Catalyzes the attachment of tryptophan to tRNA(Trp). This is Tryptophan--tRNA ligase from Xylella fastidiosa (strain Temecula1 / ATCC 700964).